The sequence spans 308 residues: Putative acetyl-hydrolase LipR (308 aa).

The signal sequence occupies residues 1–40 (MNLRKNVIRSVLRGARPLFASRRLGIAGRRVLLATLTAGA). An Involved in the stabilization of the negatively charged intermediate by the formation of the oxyanion hole motif is present at residues 76–78 (HGG). Residues Ser146, Asp239, and His269 contribute to the active site.

This sequence belongs to the 'GDXG' lipolytic enzyme family.

In terms of biological role, required for maintaining the appropriate mycolic acid composition and permeability of the envelope on its exposure to acidic pH. The protein is Putative acetyl-hydrolase LipR (lipR) of Mycobacterium tuberculosis (strain ATCC 25618 / H37Rv).